Here is a 293-residue protein sequence, read N- to C-terminus: 4-hydroxy-tetrahydrodipicolinate synthase (293 aa).

T45 lines the pyruvate pocket. Y133 functions as the Proton donor/acceptor in the catalytic mechanism. The active-site Schiff-base intermediate with substrate is K161. Position 203 (I203) interacts with pyruvate.

This sequence belongs to the DapA family. Homotetramer; dimer of dimers.

Its subcellular location is the cytoplasm. It catalyses the reaction L-aspartate 4-semialdehyde + pyruvate = (2S,4S)-4-hydroxy-2,3,4,5-tetrahydrodipicolinate + H2O + H(+). The protein operates within amino-acid biosynthesis; L-lysine biosynthesis via DAP pathway; (S)-tetrahydrodipicolinate from L-aspartate: step 3/4. Functionally, catalyzes the condensation of (S)-aspartate-beta-semialdehyde [(S)-ASA] and pyruvate to 4-hydroxy-tetrahydrodipicolinate (HTPA). This Exiguobacterium sibiricum (strain DSM 17290 / CCUG 55495 / CIP 109462 / JCM 13490 / 255-15) protein is 4-hydroxy-tetrahydrodipicolinate synthase.